The following is a 281-amino-acid chain: ATP synthase gamma chain (281 aa).

This sequence belongs to the ATPase gamma chain family. F-type ATPases have 2 components, CF(1) - the catalytic core - and CF(0) - the membrane proton channel. CF(1) has five subunits: alpha(3), beta(3), gamma(1), delta(1), epsilon(1). CF(0) has three main subunits: a, b and c.

The protein resides in the cell membrane. Produces ATP from ADP in the presence of a proton gradient across the membrane. The gamma chain is believed to be important in regulating ATPase activity and the flow of protons through the CF(0) complex. The polypeptide is ATP synthase gamma chain (Mesoplasma florum (strain ATCC 33453 / NBRC 100688 / NCTC 11704 / L1) (Acholeplasma florum)).